Consider the following 1691-residue polypeptide: Collagen alpha-6(IV) chain (1691 aa).

A signal peptide spans 1–22; that stretch reads MLINKLWLLLVTLCLTEELAAA. Residues 23 to 46 form a 7S domain region; it reads GEKSYGKPCGGQDCSGSCQCFPEK. Residues 47-1463 form a triple-helical region region; it reads GARGRPGPIG…FGMPGMPGQS (1417 aa). Disordered stretches follow at residues 108 to 338, 404 to 473, 486 to 881, 915 to 1099, and 1185 to 1459; these read IPGH…EGQK, GFPG…LGLK, GGVP…KGSP, GIPG…KGRD, and THGT…MPGM. Asparagine 127 carries N-linked (GlcNAc...) asparagine glycosylation. A compositionally biased stretch (low complexity) spans 185–197; that stretch reads PQGAPGFPGAVGP. The span at 198–213 shows a compositional bias: pro residues; sequence AGPPGLQGPPGPPGPL. Composition is skewed to low complexity over residues 311-320 and 421-431; these read QGPPGQQGKK and GAAGLPGRDGL. 2 stretches are compositionally biased toward pro residues: residues 432–443 and 491–502; these read PGPPGPPGPPSP and TGPPGEPGPPGP. Positions 503 to 512 are enriched in low complexity; sequence WGLIGLPGLK. The Cell attachment site motif lies at 515 to 517; that stretch reads RGD. Positions 526–541 are enriched in low complexity; sequence PAGAPGLVGPLGPSGP. A Cell attachment site motif is present at residues 560–562; it reads RGD. Residues 588–599 show a composition bias toward gly residues; the sequence is GLPGDGGQGFPG. Low complexity-rich tracts occupy residues 641 to 652, 660 to 703, 722 to 735, and 802 to 820; these read LPGQQGLPGSKG, PGSY…GSPG, LPGFPGLPGKDGLP, and SPGTPGQVGQPGTPGSSGP. Over residues 842–851 the composition is skewed to basic residues; that stretch reads PGKKGTRGKK. Residues 853–878 show a composition bias toward low complexity; sequence PPGSIVKKGLPGLKGLPGNPGLVGLK. The short motif at 986-988 is the Cell attachment site element; it reads RGD. Residues 1055 to 1068 are compositionally biased toward low complexity; that stretch reads SPGLPGASGLPGLK. A compositionally biased stretch (gly residues) spans 1210-1220; that stretch reads GYPGIGIGAPG. Positions 1234–1253 are enriched in low complexity; the sequence is PGLQGPAGLPGAPGISLPSL. Residues 1275–1284 show a composition bias toward pro residues; that stretch reads PAGPPGPPGP. The segment covering 1360–1371 has biased composition (polar residues); sequence SGLQGDPGQTPT. Low complexity-rich tracts occupy residues 1384–1397 and 1429–1459; these read LPGIDGIPGLTGDP and ALGDPGLPGLQGPPGFEGAPGQQGPFGMPGM. The Collagen IV NC1 domain occupies 1467-1691; the sequence is GYTLVKHSQS…SRCQVCMKSL (225 aa). Intrachain disulfides connect cysteine 1482–cysteine 1571, cysteine 1515–cysteine 1568, cysteine 1527–cysteine 1533, cysteine 1590–cysteine 1687, cysteine 1624–cysteine 1684, and cysteine 1636–cysteine 1643.

It belongs to the type IV collagen family. There are six type IV collagen isoforms, alpha 1(IV)-alpha 6(IV), each of which can form a triple helix structure with 2 other chains to generate type IV collagen network. In terms of processing, prolines at the third position of the tripeptide repeating unit (G-X-Y) are hydroxylated in some or all of the chains. Type IV collagens contain numerous cysteine residues which are involved in inter- and intramolecular disulfide bonding. 12 of these, located in the NC1 domain, are conserved in all known type IV collagens. Post-translationally, the trimeric structure of the NC1 domains is stabilized by covalent bonds between Lys and Met residues.

It is found in the secreted. The protein localises to the extracellular space. The protein resides in the extracellular matrix. It localises to the basement membrane. Type IV collagen is the major structural component of glomerular basement membranes (GBM), forming a 'chicken-wire' meshwork together with laminins, proteoglycans and entactin/nidogen. This chain is Collagen alpha-6(IV) chain (COL4A6), found in Homo sapiens (Human).